An 810-amino-acid chain; its full sequence is LPS-assembly protein LptD (810 aa).

Positions 1–29 (MTKRTLGYSYPIALTISLVPALTPAIVQA) are cleaved as a signal peptide.

Belongs to the LptD family. As to quaternary structure, component of the lipopolysaccharide transport and assembly complex. Interacts with LptE and LptA.

The protein resides in the cell outer membrane. Functionally, together with LptE, is involved in the assembly of lipopolysaccharide (LPS) at the surface of the outer membrane. This Aeromonas hydrophila subsp. hydrophila (strain ATCC 7966 / DSM 30187 / BCRC 13018 / CCUG 14551 / JCM 1027 / KCTC 2358 / NCIMB 9240 / NCTC 8049) protein is LPS-assembly protein LptD.